The chain runs to 729 residues: Phosphoribosylformylglycinamidine synthase subunit PurL (729 aa).

His42 is a catalytic residue. ATP contacts are provided by Tyr45 and Lys84. Position 86 (Glu86) interacts with Mg(2+). Substrate contacts are provided by residues 87–90 (SHNH) and Arg109. The Proton acceptor role is filled by His88. Residue Asp110 coordinates Mg(2+). Gln238 serves as a coordination point for substrate. Asp266 contacts Mg(2+). Residue 310 to 312 (ESQ) participates in substrate binding. ATP is bound by residues Asp492 and Gly529. Asn530 lines the Mg(2+) pocket. Ser532 is a substrate binding site.

This sequence belongs to the FGAMS family. As to quaternary structure, monomer. Part of the FGAM synthase complex composed of 1 PurL, 1 PurQ and 2 PurS subunits.

The protein localises to the cytoplasm. The catalysed reaction is N(2)-formyl-N(1)-(5-phospho-beta-D-ribosyl)glycinamide + L-glutamine + ATP + H2O = 2-formamido-N(1)-(5-O-phospho-beta-D-ribosyl)acetamidine + L-glutamate + ADP + phosphate + H(+). It functions in the pathway purine metabolism; IMP biosynthesis via de novo pathway; 5-amino-1-(5-phospho-D-ribosyl)imidazole from N(2)-formyl-N(1)-(5-phospho-D-ribosyl)glycinamide: step 1/2. In terms of biological role, part of the phosphoribosylformylglycinamidine synthase complex involved in the purines biosynthetic pathway. Catalyzes the ATP-dependent conversion of formylglycinamide ribonucleotide (FGAR) and glutamine to yield formylglycinamidine ribonucleotide (FGAM) and glutamate. The FGAM synthase complex is composed of three subunits. PurQ produces an ammonia molecule by converting glutamine to glutamate. PurL transfers the ammonia molecule to FGAR to form FGAM in an ATP-dependent manner. PurS interacts with PurQ and PurL and is thought to assist in the transfer of the ammonia molecule from PurQ to PurL. In Campylobacter concisus (strain 13826), this protein is Phosphoribosylformylglycinamidine synthase subunit PurL.